We begin with the raw amino-acid sequence, 195 residues long: Putative manganese efflux pump MntP (195 aa).

A run of 6 helical transmembrane segments spans residues 3 to 23, 40 to 60, 68 to 88, 106 to 126, 132 to 152, and 165 to 185; these read LSATLILAFGMSMDAFAASVG, GLIFGVIEAITPLIGWGLGLL, WDHWVAFTLLAFLGGRMVLAG, VLIATAIATSLDALAIGVGLA, ILHAALLIGLATLIMSTIGML, and AEIIGGLILIGIGCNILYSHI.

This sequence belongs to the MntP (TC 9.B.29) family.

The protein resides in the cell inner membrane. Functionally, probably functions as a manganese efflux pump. This chain is Putative manganese efflux pump MntP, found in Sodalis glossinidius (strain morsitans).